The primary structure comprises 120 residues: Small ribosomal subunit protein uS13 (120 aa).

The interval 97–120 (PVRGQRTKTNARTRKGKKKTVGAK) is disordered.

Belongs to the universal ribosomal protein uS13 family. As to quaternary structure, part of the 30S ribosomal subunit. Forms a loose heterodimer with protein S19. Forms two bridges to the 50S subunit in the 70S ribosome.

In terms of biological role, located at the top of the head of the 30S subunit, it contacts several helices of the 16S rRNA. In the 70S ribosome it contacts the 23S rRNA (bridge B1a) and protein L5 of the 50S subunit (bridge B1b), connecting the 2 subunits; these bridges are implicated in subunit movement. Contacts the tRNAs in the A and P-sites. In Nitratiruptor sp. (strain SB155-2), this protein is Small ribosomal subunit protein uS13.